A 92-amino-acid chain; its full sequence is Putative protein pog (92 aa).

In Acute bee paralysis virus (strain Rothamsted) (ABPV), this protein is Putative protein pog.